The chain runs to 813 residues: Kinesin-like protein KIN-8B (813 aa).

In terms of domain architecture, Kinesin motor spans 14-345 (TLTVAVKCRP…LKYADRAKEI (332 aa)). ATP is bound at residue 104–111 (GSTGSGKT). Residues 349 to 391 (IQKNIGTIDTHMSDYQRMIDNLQSEVSQLKTQLAEKESQLSIK) are a coiled coil. Disordered regions lie at residues 664–694 (GSRP…PRMA) and 756–813 (AVST…RQHQ). 3 stretches are compositionally biased toward polar residues: residues 682–694 (YPQT…PRMA), 761–791 (GARN…NSHT), and 804–813 (KGNNTQRQHQ).

This sequence belongs to the TRAFAC class myosin-kinesin ATPase superfamily. Kinesin family. KIN-8 subfamily.

This is Kinesin-like protein KIN-8B from Arabidopsis thaliana (Mouse-ear cress).